We begin with the raw amino-acid sequence, 195 residues long: Nicotinamide riboside kinase 1 (195 aa).

Position 10 to 18 (10 to 18) interacts with ATP; sequence GVTNGGKTT. Mg(2+) is bound by residues T17 and D36. The active-site Proton acceptor is D36. Residues 36–39 and 55–56 contribute to the substrate site; these read DDFF and YD. R128 is a binding site for ATP. Substrate contacts are provided by residues R129 and 134-135; that span reads YE. Residues 132–134 and 172–174 contribute to the ATP site; these read RVY and RSE.

The protein belongs to the uridine kinase family. NRK subfamily. Monomer.

It carries out the reaction beta-nicotinamide D-riboside + ATP = beta-nicotinamide D-ribonucleotide + ADP + H(+). The enzyme catalyses beta-D-ribosylnicotinate + ATP = nicotinate beta-D-ribonucleotide + ADP + H(+). Its pathway is cofactor biosynthesis; NAD(+) biosynthesis. Functionally, catalyzes the phosphorylation of nicotinamide riboside (NR) and nicotinic acid riboside (NaR) to form nicotinamide mononucleotide (NMN) and nicotinic acid mononucleotide (NaMN). This is Nicotinamide riboside kinase 1 (Nmrk1) from Mus musculus (Mouse).